The sequence spans 1101 residues: Carbamoyl phosphate synthase large chain (1101 aa).

The carboxyphosphate synthetic domain stretch occupies residues 1–402; the sequence is MPKRTDLKSV…ALQKALRSLE (402 aa). Residues Arg-129, Arg-169, Gly-175, Gly-176, Glu-208, Ile-210, Glu-215, Gly-241, Val-242, His-243, Gln-285, and Glu-299 each coordinate ATP. Positions 133-328 constitute an ATP-grasp 1 domain; that stretch reads KGVVERAGGE…IAKIATKLAL (196 aa). Mg(2+) contacts are provided by Gln-285, Glu-299, and Asn-301. Mn(2+) contacts are provided by Gln-285, Glu-299, and Asn-301. The oligomerization domain stretch occupies residues 403-544; the sequence is QKGSELAFPQ…YRYSSYDLET (142 aa). Residues 545–947 are carbamoyl phosphate synthetic domain; that stretch reads EVAPHEGESV…AFAKSQSAAG (403 aa). Residues 675-866 enclose the ATP-grasp 2 domain; it reads ALVLERAGLV…LAKAAARIGV (192 aa). Positions 711, 750, 752, 757, 782, 783, 784, 785, 825, and 837 each coordinate ATP. Residues Gln-825, Glu-837, and Asn-839 each coordinate Mg(2+). The Mn(2+) site is built by Gln-825, Glu-837, and Asn-839. The region spanning 948–1093 is the MGS-like domain; that stretch reads GPLPTSGRVF…QEHDARLQQA (146 aa). The segment at 948–1101 is allosteric domain; sequence GPLPTSGRVF…QAVAGPEAAA (154 aa).

The protein belongs to the CarB family. Composed of two chains; the small (or glutamine) chain promotes the hydrolysis of glutamine to ammonia, which is used by the large (or ammonia) chain to synthesize carbamoyl phosphate. Tetramer of heterodimers (alpha,beta)4. Mg(2+) serves as cofactor. It depends on Mn(2+) as a cofactor.

It carries out the reaction hydrogencarbonate + L-glutamine + 2 ATP + H2O = carbamoyl phosphate + L-glutamate + 2 ADP + phosphate + 2 H(+). The catalysed reaction is hydrogencarbonate + NH4(+) + 2 ATP = carbamoyl phosphate + 2 ADP + phosphate + 2 H(+). Its pathway is amino-acid biosynthesis; L-arginine biosynthesis; carbamoyl phosphate from bicarbonate: step 1/1. It participates in pyrimidine metabolism; UMP biosynthesis via de novo pathway; (S)-dihydroorotate from bicarbonate: step 1/3. Large subunit of the glutamine-dependent carbamoyl phosphate synthetase (CPSase). CPSase catalyzes the formation of carbamoyl phosphate from the ammonia moiety of glutamine, carbonate, and phosphate donated by ATP, constituting the first step of 2 biosynthetic pathways, one leading to arginine and/or urea and the other to pyrimidine nucleotides. The large subunit (synthetase) binds the substrates ammonia (free or transferred from glutamine from the small subunit), hydrogencarbonate and ATP and carries out an ATP-coupled ligase reaction, activating hydrogencarbonate by forming carboxy phosphate which reacts with ammonia to form carbamoyl phosphate. The polypeptide is Carbamoyl phosphate synthase large chain (Micrococcus luteus (strain ATCC 4698 / DSM 20030 / JCM 1464 / CCM 169 / CCUG 5858 / IAM 1056 / NBRC 3333 / NCIMB 9278 / NCTC 2665 / VKM Ac-2230) (Micrococcus lysodeikticus)).